Consider the following 463-residue polypeptide: L-seryl-tRNA(Sec) selenium transferase (463 aa).

Lysine 295 is modified (N6-(pyridoxal phosphate)lysine).

This sequence belongs to the SelA family. As to quaternary structure, homodecamer; pentamer of dimers. Binds only one seryl-tRNA(Sec) per dimer. Pyridoxal 5'-phosphate is required as a cofactor.

The protein resides in the cytoplasm. The catalysed reaction is L-seryl-tRNA(Sec) + selenophosphate + H(+) = L-selenocysteinyl-tRNA(Sec) + phosphate. The protein operates within aminoacyl-tRNA biosynthesis; selenocysteinyl-tRNA(Sec) biosynthesis; selenocysteinyl-tRNA(Sec) from L-seryl-tRNA(Sec) (bacterial route): step 1/1. Functionally, converts seryl-tRNA(Sec) to selenocysteinyl-tRNA(Sec) required for selenoprotein biosynthesis. This chain is L-seryl-tRNA(Sec) selenium transferase, found in Shigella dysenteriae serotype 1 (strain Sd197).